Reading from the N-terminus, the 53-residue chain is UPF0391 membrane protein Bmul_5473/BMULJ_06024 (53 aa).

Transmembrane regions (helical) follow at residues 5–25 (ALIF…GIAA) and 30–50 (IAKI…LLGV).

It belongs to the UPF0391 family.

It localises to the cell membrane. The polypeptide is UPF0391 membrane protein Bmul_5473/BMULJ_06024 (Burkholderia multivorans (strain ATCC 17616 / 249)).